Here is an 83-residue protein sequence, read N- to C-terminus: Sec-independent protein translocase protein TatA (83 aa).

Residues 1-21 (MGGLSLPHLIVLALVVLILFG) form a helical membrane-spanning segment. The segment at 34–83 (KGIKSFKQGMNDEDSKPVTPPPAQIPPASLQQTPPPAQPAPQPTSTDQAQ) is disordered. Residues 66–75 (TPPPAQPAPQ) show a composition bias toward pro residues.

The protein belongs to the TatA/E family. In terms of assembly, the Tat system comprises two distinct complexes: a TatABC complex, containing multiple copies of TatA, TatB and TatC subunits, and a separate TatA complex, containing only TatA subunits. Substrates initially bind to the TatABC complex, which probably triggers association of the separate TatA complex to form the active translocon.

It localises to the cell inner membrane. In terms of biological role, part of the twin-arginine translocation (Tat) system that transports large folded proteins containing a characteristic twin-arginine motif in their signal peptide across membranes. TatA could form the protein-conducting channel of the Tat system. This chain is Sec-independent protein translocase protein TatA, found in Novosphingobium aromaticivorans (strain ATCC 700278 / DSM 12444 / CCUG 56034 / CIP 105152 / NBRC 16084 / F199).